We begin with the raw amino-acid sequence, 61 residues long: UPF0434 protein Nmul_A1027 (61 aa).

It belongs to the UPF0434 family.

The protein is UPF0434 protein Nmul_A1027 of Nitrosospira multiformis (strain ATCC 25196 / NCIMB 11849 / C 71).